Reading from the N-terminus, the 64-residue chain is Cytochrome b-c1 complex subunit 9 (64 aa).

Residues 2 to 18 (SSPTIPSRLYSLLFRRT) lie on the Mitochondrial matrix side of the membrane. Residues 19 to 43 (STFALTIAVGALFFERAFDQGADAI) form a helical membrane-spanning segment. Over 44-63 (YEHINEGKLWKHIKHKYENK) the chain is Mitochondrial intermembrane.

The protein belongs to the UQCR10/QCR9 family. Component of the ubiquinol-cytochrome c oxidoreductase (cytochrome b-c1 complex, complex III, CIII), a multisubunit enzyme composed of 11 subunits. The complex is composed of 3 respiratory subunits cytochrome b, cytochrome c1 and Rieske protein UQCRFS1, 2 core protein subunits UQCRC1/QCR1 and UQCRC2/QCR2, and 6 low-molecular weight protein subunits UQCRH/QCR6, UQCRB/QCR7, UQCRQ/QCR8, UQCR10/QCR9, UQCR11/QCR10 and subunit 9, the cleavage product of Rieske protein UQCRFS1. The complex exists as an obligatory dimer and forms supercomplexes (SCs) in the inner mitochondrial membrane with NADH-ubiquinone oxidoreductase (complex I, CI) and cytochrome c oxidase (complex IV, CIV), resulting in different assemblies (supercomplex SCI(1)III(2)IV(1) and megacomplex MCI(2)III(2)IV(2)). Interacts with STMP1.

Its subcellular location is the mitochondrion inner membrane. In terms of biological role, component of the ubiquinol-cytochrome c oxidoreductase, a multisubunit transmembrane complex that is part of the mitochondrial electron transport chain which drives oxidative phosphorylation. The respiratory chain contains 3 multisubunit complexes succinate dehydrogenase (complex II, CII), ubiquinol-cytochrome c oxidoreductase (cytochrome b-c1 complex, complex III, CIII) and cytochrome c oxidase (complex IV, CIV), that cooperate to transfer electrons derived from NADH and succinate to molecular oxygen, creating an electrochemical gradient over the inner membrane that drives transmembrane transport and the ATP synthase. The cytochrome b-c1 complex catalyzes electron transfer from ubiquinol to cytochrome c, linking this redox reaction to translocation of protons across the mitochondrial inner membrane, with protons being carried across the membrane as hydrogens on the quinol. In the process called Q cycle, 2 protons are consumed from the matrix, 4 protons are released into the intermembrane space and 2 electrons are passed to cytochrome c. This is Cytochrome b-c1 complex subunit 9 (Uqcr10) from Mus musculus (Mouse).